A 255-amino-acid polypeptide reads, in one-letter code: 3-deoxy-manno-octulosonate cytidylyltransferase (255 aa).

It belongs to the KdsB family.

It is found in the cytoplasm. It carries out the reaction 3-deoxy-alpha-D-manno-oct-2-ulosonate + CTP = CMP-3-deoxy-beta-D-manno-octulosonate + diphosphate. The protein operates within nucleotide-sugar biosynthesis; CMP-3-deoxy-D-manno-octulosonate biosynthesis; CMP-3-deoxy-D-manno-octulosonate from 3-deoxy-D-manno-octulosonate and CTP: step 1/1. It participates in bacterial outer membrane biogenesis; lipopolysaccharide biosynthesis. Activates KDO (a required 8-carbon sugar) for incorporation into bacterial lipopolysaccharide in Gram-negative bacteria. This chain is 3-deoxy-manno-octulosonate cytidylyltransferase, found in Cellvibrio japonicus (strain Ueda107) (Pseudomonas fluorescens subsp. cellulosa).